The sequence spans 89 residues: Omega-theraphotoxin-Ba1c (89 aa).

The signal sequence occupies residues 1-23 (MRSLTLAAVLACSLLLVFHTSAA). Residues 24–50 (EEHEAQEGYLMNPGDTDTALATVDDER) constitute a propeptide that is removed on maturation. 3 cysteine pairs are disulfide-bonded: cysteine 54-cysteine 75, cysteine 58-cysteine 81, and cysteine 67-cysteine 86.

The protein belongs to the neurotoxin 12 (Hwtx-2) family. 06 (TXP1) subfamily. In terms of tissue distribution, expressed by the venom gland.

The protein localises to the secreted. Its function is as follows. Inhibits voltage-gated calcium channels (Cav) in rat cerebellar granule cells. Has insecticidal activity. The chain is Omega-theraphotoxin-Ba1c from Brachypelma albiceps (Mexican golden redrump tarantula).